The following is a 202-amino-acid chain: HTH-type transcriptional regulator BetI (202 aa).

In terms of domain architecture, HTH tetR-type spans 8–68 (PIRRRQLIDA…ATMRDITRQL (61 aa)). The H-T-H motif DNA-binding region spans 31–50 (TIAQIARRAGVSAGIISHYF).

It participates in amine and polyamine biosynthesis; betaine biosynthesis via choline pathway [regulation]. Functionally, repressor involved in the biosynthesis of the osmoprotectant glycine betaine. It represses transcription of the choline transporter BetT and the genes of BetAB involved in the synthesis of glycine betaine. The sequence is that of HTH-type transcriptional regulator BetI from Cronobacter sakazakii (strain ATCC BAA-894) (Enterobacter sakazakii).